A 316-amino-acid polypeptide reads, in one-letter code: MTTQLEQLRKLTTVVADTGDIEAIAKYTPEDATTNPSLILKAAQIAEYAPLIDASIEYAKAQSNDKAQQVQDTCDMLAVSIGKEILKVVPGRISTEIDACLSYDTEGSIAKARQLIKMYNEAGITNDRILIKLASTWEGIRAAEVLEKEGINCNLTLLFSFAQARACAEAGVFLISPFVGRIMDWYKAKEGRDFEPSEDPGVISVAGIYNYYKEHGYKTVVMGASFRNIGEILELAGCDRLTISPNLLQELEDATGEVVEKLIDTNGNKECPAAMTHAEFLWDHNQDPMAVEKLAEGIRNFAVDQGKLEEMIAAKL.

The active-site Schiff-base intermediate with substrate is the Lys-132.

It belongs to the transaldolase family. Type 1 subfamily. In terms of assembly, homodimer.

The protein localises to the cytoplasm. It carries out the reaction D-sedoheptulose 7-phosphate + D-glyceraldehyde 3-phosphate = D-erythrose 4-phosphate + beta-D-fructose 6-phosphate. The protein operates within carbohydrate degradation; pentose phosphate pathway; D-glyceraldehyde 3-phosphate and beta-D-fructose 6-phosphate from D-ribose 5-phosphate and D-xylulose 5-phosphate (non-oxidative stage): step 2/3. Transaldolase is important for the balance of metabolites in the pentose-phosphate pathway. The polypeptide is Transaldolase (Aliivibrio salmonicida (strain LFI1238) (Vibrio salmonicida (strain LFI1238))).